Consider the following 299-residue polypeptide: Regucalcin (299 aa).

Glutamate 18 provides a ligand contact to a divalent metal cation. Positions 101, 103, and 121 each coordinate substrate. The residue at position 144 (lysine 144) is an N6-succinyllysine. A divalent metal cation contacts are provided by asparagine 154 and aspartate 204. Residue aspartate 204 is the Proton donor/acceptor of the active site. An N6-succinyllysine mark is found at lysine 244 and lysine 253.

Belongs to the SMP-30/CGR1 family. As to quaternary structure, monomer. The cofactor is Zn(2+). It depends on Mn(2+) as a cofactor. Ca(2+) serves as cofactor. Requires Mg(2+) as cofactor.

It is found in the cytoplasm. It carries out the reaction D-glucono-1,5-lactone + H2O = D-gluconate + H(+). Functionally, gluconolactonase with low activity towards other sugar lactones, including gulonolactone and galactonolactone. Can also hydrolyze diisopropyl phosphorofluoridate and phenylacetate (in vitro). Calcium-binding protein. Modulates Ca(2+) signaling, and Ca(2+)-dependent cellular processes and enzyme activities. The polypeptide is Regucalcin (RGN) (Macaca fascicularis (Crab-eating macaque)).